Consider the following 433-residue polypeptide: GTPase Obg (433 aa).

Residues 1–159 (MAITDYCECR…LNVSLEVKYL (159 aa)) enclose the Obg domain. Residues 160-329 (ANVGIVGFPN…LLDRVFELYN (170 aa)) enclose the OBG-type G domain. GTP-binding positions include 166–173 (GFPNSGKS), 191–195 (FTTLI), 212–215 (DIPG), 282–285 (NKID), and 310–312 (ISA). The Mg(2+) site is built by Ser-173 and Thr-193. In terms of domain architecture, OCT spans 355-433 (TNENNNDPLN…FDGCEFVIND (79 aa)).

The protein belongs to the TRAFAC class OBG-HflX-like GTPase superfamily. OBG GTPase family. Monomer. Mg(2+) is required as a cofactor.

The protein localises to the cytoplasm. Functionally, an essential GTPase which binds GTP, GDP and possibly (p)ppGpp with moderate affinity, with high nucleotide exchange rates and a fairly low GTP hydrolysis rate. Plays a role in control of the cell cycle, stress response, ribosome biogenesis and in those bacteria that undergo differentiation, in morphogenesis control. In Mycoplasma genitalium (strain ATCC 33530 / DSM 19775 / NCTC 10195 / G37) (Mycoplasmoides genitalium), this protein is GTPase Obg.